Here is a 300-residue protein sequence, read N- to C-terminus: MGFVKVVKNKQYFKRYQVKFKRRREGKTDYYARKRLIVQDKNKYDTPKYRLIVRFSNRDITCQVAHSRIEGDKIVCAAYSHELPKYGVKVGLTNYAAAYCTGLLVARRLLKKLGLDRLYEGLKEANGEEYYVEPADEGPNAFRCNLDVGLMKTSTGARVFGAMKGAVDGGFNIPHSVKRFPGYDAEAKEYSAETHRKHILGLHVAEYMRKLEEEDEDAFNRQFSQYIKLGIVADDLENMYKKAHENIRSDPKRDRKPKKDVSKEPKRWNAKKLTNAERKQRVVEAKAAYLKELQGEEMES.

Basic and acidic residues predominate over residues 246–267 (NIRSDPKRDRKPKKDVSKEPKR). The tract at residues 246-276 (NIRSDPKRDRKPKKDVSKEPKRWNAKKLTNA) is disordered.

The protein belongs to the universal ribosomal protein uL18 family. Component of the large ribosomal subunit (LSU).

The protein resides in the cytoplasm. It is found in the nucleus. Its function is as follows. Component of the ribosome, a large ribonucleoprotein complex responsible for the synthesis of proteins in the cell. The small ribosomal subunit (SSU) binds messenger RNAs (mRNAs) and translates the encoded message by selecting cognate aminoacyl-transfer RNA (tRNA) molecules. The large subunit (LSU) contains the ribosomal catalytic site termed the peptidyl transferase center (PTC), which catalyzes the formation of peptide bonds, thereby polymerizing the amino acids delivered by tRNAs into a polypeptide chain. The nascent polypeptides leave the ribosome through a tunnel in the LSU and interact with protein factors that function in enzymatic processing, targeting, and the membrane insertion of nascent chains at the exit of the ribosomal tunnel. This chain is Large ribosomal subunit protein uL18 (RpL5), found in Toxoptera citricida (Brown citrus aphid).